The primary structure comprises 329 residues: ATP-dependent (S)-NAD(P)H-hydrate dehydratase (329 aa).

A YjeF C-terminal domain is found at 35 to 326 (TLQLVRNIIP…AEVGAAFSKL (292 aa)). Y67 bears the Phosphotyrosine mark. (6S)-NADPHX-binding positions include G135 and 188-194 (NHMEFSR). N207 and N222 each carry an N-linked (GlcNAc...) asparagine glycan. Residues 228 to 232 (KGERD) and 247 to 256 (GSSRRCGGQG) each bind ATP. A (6S)-NADPHX-binding site is contributed by D257. A glycan (N-linked (GlcNAc...) asparagine) is linked at N279.

Belongs to the NnrD/CARKD family. The cofactor is Mg(2+).

It is found in the mitochondrion. It carries out the reaction (6S)-NADHX + ATP = ADP + phosphate + NADH + H(+). It catalyses the reaction (6S)-NADPHX + ATP = ADP + phosphate + NADPH + H(+). Functionally, catalyzes the dehydration of the S-form of NAD(P)HX at the expense of ATP, which is converted to ADP. Together with NAD(P)HX epimerase, which catalyzes the epimerization of the S- and R-forms, the enzyme allows the repair of both epimers of NAD(P)HX, a damaged form of NAD(P)H that is a result of enzymatic or heat-dependent hydration. The chain is ATP-dependent (S)-NAD(P)H-hydrate dehydratase from Pongo abelii (Sumatran orangutan).